The chain runs to 172 residues: uncharacterized protein (172 aa).

Topologically, residues 1–101 (MEHVSKRSIG…RYDINTRPLV (101 aa)) are lumenal. The helical transmembrane segment at 102–122 (VVLAISIVFFGCLLVLKDIII) threads the bilayer. The Cytoplasmic segment spans residues 123 to 145 (QSSENILSVSKWKIIGASFMGTP). Residues 146 to 164 (YTGLLTGLVGPLLSPFSAV) traverse the membrane as a helical segment. At 165 to 172 (SSWLSFIF) the chain is on the lumenal side.

It localises to the endoplasmic reticulum membrane. This is an uncharacterized protein from Saccharomyces cerevisiae (strain ATCC 204508 / S288c) (Baker's yeast).